The following is a 420-amino-acid chain: ATP phosphoribosyltransferase regulatory subunit (420 aa).

The protein belongs to the class-II aminoacyl-tRNA synthetase family. HisZ subfamily. As to quaternary structure, heteromultimer composed of HisG and HisZ subunits.

It localises to the cytoplasm. It participates in amino-acid biosynthesis; L-histidine biosynthesis; L-histidine from 5-phospho-alpha-D-ribose 1-diphosphate: step 1/9. Functionally, required for the first step of histidine biosynthesis. May allow the feedback regulation of ATP phosphoribosyltransferase activity by histidine. The protein is ATP phosphoribosyltransferase regulatory subunit of Bacillus cereus (strain ATCC 14579 / DSM 31 / CCUG 7414 / JCM 2152 / NBRC 15305 / NCIMB 9373 / NCTC 2599 / NRRL B-3711).